Reading from the N-terminus, the 43-residue chain is Thymosin beta-b (43 aa).

Basic and acidic residues-rich tracts occupy residues methionine 1–glutamate 25 and glutamate 33–alanine 43. Positions methionine 1–alanine 43 are disordered.

This sequence belongs to the thymosin beta family.

It localises to the cytoplasm. It is found in the cytoskeleton. Functionally, plays an important role in the organization of the cytoskeleton. Binds to and sequesters actin monomers (G actin) and therefore inhibits actin polymerization. In Cyprinus carpio (Common carp), this protein is Thymosin beta-b.